A 214-amino-acid chain; its full sequence is Orotidine 5'-phosphate decarboxylase (214 aa).

Substrate is bound by residues Asp11, Lys33, 59-68, Ser114, 164-174, Gly187, and Arg188; these read DFKIADIPNT and PGIGSQGGRAS. The Proton donor role is filled by Lys61.

This sequence belongs to the OMP decarboxylase family. Type 1 subfamily. Homodimer.

It carries out the reaction orotidine 5'-phosphate + H(+) = UMP + CO2. It participates in pyrimidine metabolism; UMP biosynthesis via de novo pathway; UMP from orotate: step 2/2. Functionally, catalyzes the decarboxylation of orotidine 5'-monophosphate (OMP) to uridine 5'-monophosphate (UMP). This is Orotidine 5'-phosphate decarboxylase from Thermoplasma acidophilum (strain ATCC 25905 / DSM 1728 / JCM 9062 / NBRC 15155 / AMRC-C165).